A 1538-amino-acid polypeptide reads, in one-letter code: Lhr helicase/uracil glycosylase (1538 aa).

The lhr-Core stretch occupies residues 1–897; that stretch reads MADNPDPSSL…ERRASVLSLD (897 aa). The ATP site is built by Gln34, Lys57, Thr58, Asp179, Glu180, Ile398, Arg415, and His418. The Helicase ATP-binding domain occupies 38 to 235; sequence WHVAARSEHA…FLGGDRPVTV (198 aa). The DEVH box signature appears at 179–182; that stretch reads DEVH. The Helicase C-terminal domain occupies 284 to 462; that stretch reads GILDEVLRHR…NLTPPHNPLD (179 aa). The interval 463 to 552 is beta-sheet bundle; sequence VLAQQTVAAA…VTSGGTIPDR (90 aa). The interval 553–623 is WH domain; it reads GMYSVLLPEG…SARLPFWRGE (71 aa). Residues 624–897 are domain 4; that stretch reads GNGRPAELGE…ERRASVLSLD (274 aa). The segment at 898–1538 is lhr-CTD; the sequence is SELLRNLLGQ…SSSPQGLDWG (641 aa). The interval 1287-1312 is disordered; that stretch reads SNARTSTRRSHRARRGRPVYAQPVSP. Positions 1292 to 1303 are enriched in basic residues; that stretch reads STRRSHRARRGR.

The protein belongs to the Lhr helicase family. In terms of assembly, homooligomerizes, probably a homotetramer. It depends on Ca(2+) as a cofactor. Requires Uracil deglycosylase activity does not require a cofactor. as cofactor.

It catalyses the reaction Couples ATP hydrolysis with the unwinding of duplex DNA by translocating in the 3'-5' direction.. The catalysed reaction is ATP + H2O = ADP + phosphate + H(+). It carries out the reaction Hydrolyzes single-stranded DNA or mismatched double-stranded DNA and polynucleotides, releasing free uracil.. Its function is as follows. A 3'-5' helicase probably involved in DNA repair. Translocates in an ATP-dependent manner 3'-to-5' on single-stranded (ss)DNA, unwinding any encountered duplex nucleic acid. An RNA:DNA hybrid with a 3'-ssDNA loading strand is a 4.5-fold better helicase substrate than 3'-tailed double-stranded (ds)DNA; substrates where the helicase loads on a 3'-ssRNA tail (DNA:RNA and RNA:RNA) are not unwound. Unlike its M.smegmatis counterpart, the ATPase is not ssDNA-dependent. Forms a clamp around the ssDNA loading strand. Excises uracil residues from DNA; forked DNA with a dU residue is the best substrate followed by ssDNA. Inactive on dsDNA with a dU residue or DNA with an 8-oxoguanine residue. Uracil residues in DNA can arise as a result of misincorporation of dUMP residues by DNA polymerase or due to deamination of cytosine. The polypeptide is Lhr helicase/uracil glycosylase (Escherichia coli (strain K12)).